We begin with the raw amino-acid sequence, 296 residues long: Peroxidase P7 (296 aa).

Pyrrolidone carboxylic acid is present on glutamine 1. Disulfide bonds link cysteine 11–cysteine 91, cysteine 44–cysteine 49, cysteine 97–cysteine 292, and cysteine 176–cysteine 201. Histidine 42 functions as the Proton acceptor in the catalytic mechanism. Residues aspartate 43, valine 46, glycine 48, aspartate 50, and serine 52 each contribute to the Ca(2+) site. Proline 139 contributes to the substrate binding site. A heme b-binding site is contributed by histidine 169. Threonine 170 contacts Ca(2+). N-linked (GlcNAc...) asparagine glycosylation occurs at asparagine 185. Aspartate 216, serine 219, and aspartate 224 together coordinate Ca(2+).

The protein belongs to the peroxidase family. Classical plant (class III) peroxidase subfamily. The cofactor is Ca(2+). It depends on heme b as a cofactor.

The catalysed reaction is 2 a phenolic donor + H2O2 = 2 a phenolic radical donor + 2 H2O. In terms of biological role, removal of H(2)O(2), oxidation of toxic reductants, biosynthesis and degradation of lignin, suberization, auxin catabolism, response to environmental stresses such as wounding, pathogen attack and oxidative stress. These functions might be dependent on each isozyme/isoform in each plant tissue. In Brassica rapa subsp. rapa (Turnip), this protein is Peroxidase P7.